The sequence spans 431 residues: Keratin, type I cytoskeletal 40 (431 aa).

A head region spans residues 1-89; it reads MASEGSPDCC…CEEGTFNSNE (89 aa). The region spanning 89–400 is the IF rod domain; sequence EKETMQFLND…GLLEKEDSRL (312 aa). A coil 1A region spans residues 90 to 124; it reads KETMQFLNDRLASYLERVRSLEENNAELECRIREQ. A linker 1 region spans residues 125 to 135; sequence CEPDATPVCPD. The tract at residues 136 to 236 is coil 1B; sequence YQRYFDTIEE…HEEEVNLLRE (101 aa). The tract at residues 237 to 252 is linker 12; it reads QLGDRLNVELDTAPTV. The coil 2 stretch occupies residues 253-396; sequence DLNKVLDEMR…NTYRGLLEKE (144 aa). The segment at 397–431 is tail; sequence DSRLPCNPGSTASISNSACEPCSAYVICTVENCCA.

This sequence belongs to the intermediate filament family. In terms of assembly, heterotetramer of two type I and two type II keratins.

Functionally, may play a role in late hair differentiation. The chain is Keratin, type I cytoskeletal 40 (Krt40) from Rattus norvegicus (Rat).